The sequence spans 61 residues: Weak toxin CM-2 (61 aa).

4 disulfides stabilise this stretch: Cys-3–Cys-21, Cys-14–Cys-37, Cys-41–Cys-53, and Cys-54–Cys-59.

Belongs to the three-finger toxin family. Short-chain subfamily. Orphan group VI sub-subfamily. In terms of tissue distribution, expressed by the venom gland.

The protein localises to the secreted. The protein is Weak toxin CM-2 of Naja haje haje (Egyptian cobra).